The following is a 310-amino-acid chain: tRNA-cytidine(32) 2-sulfurtransferase (310 aa).

Positions 45–50 match the PP-loop motif motif; sequence SGGKDS. The [4Fe-4S] cluster site is built by cysteine 120, cysteine 123, and cysteine 211.

This sequence belongs to the TtcA family. In terms of assembly, homodimer. Mg(2+) is required as a cofactor. It depends on [4Fe-4S] cluster as a cofactor.

The protein resides in the cytoplasm. It catalyses the reaction cytidine(32) in tRNA + S-sulfanyl-L-cysteinyl-[cysteine desulfurase] + AH2 + ATP = 2-thiocytidine(32) in tRNA + L-cysteinyl-[cysteine desulfurase] + A + AMP + diphosphate + H(+). Its pathway is tRNA modification. In terms of biological role, catalyzes the ATP-dependent 2-thiolation of cytidine in position 32 of tRNA, to form 2-thiocytidine (s(2)C32). The sulfur atoms are provided by the cysteine/cysteine desulfurase (IscS) system. This chain is tRNA-cytidine(32) 2-sulfurtransferase, found in Shewanella baltica (strain OS155 / ATCC BAA-1091).